We begin with the raw amino-acid sequence, 84 residues long: MDLSNLLDFPSILPEDIQVIAPTSYAKLSLLSHCQHLKLFIGQQGSKGVCAHSRVLEEKLEAVKEVISKIIETDKILEKSEKFL.

This sequence belongs to the herpesviridae TRM2 protein family. Associates with TRM1 and TRM3 to form the tripartite terminase complex.

It localises to the host nucleus. In terms of biological role, component of the molecular motor that translocates viral genomic DNA in empty capsid during DNA packaging. Forms a tripartite terminase complex together with TRM1 and TRM3 in the host cytoplasm. Once the complex reaches the host nucleus, it interacts with the capsid portal vertex. This portal forms a ring in which genomic DNA is translocated into the capsid. The chain is Tripartite terminase subunit 2 from Alcelaphine herpesvirus 1 (strain C500) (AlHV-1).